Consider the following 303-residue polypeptide: DnaJ homolog subfamily C member 17 (303 aa).

The region spanning 11–76 is the J domain; the sequence is DLYALLGIEE…AARAAYDKVR (66 aa). Composition is skewed to basic and acidic residues over residues 78 to 106 and 150 to 166; these read ARKQ…RERQ and IRQD…ENTE. 2 disordered regions span residues 78–124 and 150–170; these read ARKQ…TTTL and IRQD…GKGT. One can recognise an RRM domain in the interval 178 to 249; it reads KCKKEDESQG…NPLKVSWLEG (72 aa). The residue at position 264 (Lys-264) is an N6-methyllysine.

The protein resides in the cytoplasm. Its subcellular location is the nucleus. Its function is as follows. May negatively affect PAX8-induced thyroglobulin/TG transcription. This chain is DnaJ homolog subfamily C member 17 (Dnajc17), found in Rattus norvegicus (Rat).